The sequence spans 310 residues: Olfactory receptor 5P54 (310 aa).

Residues 1–25 (MNGGNHTSMTELFILGPTEDPTFCI) lie on the Extracellular side of the membrane. N5 carries an N-linked (GlcNAc...) asparagine glycan. The chain crosses the membrane as a helical span at residues 26 to 46 (AFFVIFLGVYMVTLVGNISII). Residues 47 to 54 (TLIRISSQ) are Cytoplasmic-facing. A helical membrane pass occupies residues 55–75 (LHTPVYLFLNHLAFVDILYST). Topologically, residues 76–99 (LVSVIMLMELLEHELALPVAACAA) are extracellular. C97 and C189 are joined by a disulfide. The chain crosses the membrane as a helical span at residues 100-120 (ELCITVLFGSSECFLLAAMAY). Topologically, residues 121-133 (DCYVAICSPLLYS) are cytoplasmic. A helical membrane pass occupies residues 134–154 (TLMSSRVCFLLLGMSYVGGCM). The Extracellular portion of the chain corresponds to 155-196 (NGWIFTGCLLNLSFYGPYQIDHFFCDFSPLLKLSCSDVSIIG). N165 carries an N-linked (GlcNAc...) asparagine glycan. A helical membrane pass occupies residues 197 to 217 (IIPSISSGSIIVVTVLVIAVF). Residues 218-237 (YICILMTILKMHSTDGCHKA) lie on the Cytoplasmic side of the membrane. Residues 238 to 258 (FSTCNSYLTAVTLYYGTITFI) traverse the membrane as a helical segment. At 259–271 (YVMPKSNYSTEKN) the chain is on the extracellular side. N-linked (GlcNAc...) asparagine glycosylation is present at N265. Residues 272–292 (KVLSEFYTVVIPMLNHLIYSL) traverse the membrane as a helical segment. At 293–310 (KNRDVKDALRKAIVRVYT) the chain is on the cytoplasmic side.

The protein belongs to the G-protein coupled receptor 1 family.

It localises to the cell membrane. In terms of biological role, potential odorant receptor. The chain is Olfactory receptor 5P54 from Mus musculus (Mouse).